The chain runs to 197 residues: Small ribosomal subunit protein uS4B (197 aa).

Positions 88 to 153 (CRLDNMVYRM…IEKYLSNLKN (66 aa)) constitute an S4 RNA-binding domain.

Belongs to the universal ribosomal protein uS4 family. As to quaternary structure, part of the 30S ribosomal subunit. Contacts protein S5. The interaction surface between S4 and S5 is involved in control of translational fidelity.

Functionally, one of the primary rRNA binding proteins, it binds directly to 16S rRNA where it nucleates assembly of the body of the 30S subunit. In terms of biological role, with S5 and S12 plays an important role in translational accuracy. In Alkaliphilus oremlandii (strain OhILAs) (Clostridium oremlandii (strain OhILAs)), this protein is Small ribosomal subunit protein uS4B.